Here is a 3010-residue protein sequence, read N- to C-terminus: Genome polyprotein (3010 aa).

An N-acetylserine; by host modification is found at S2. Positions 2-23 (STNPKPQRKTKRNTNRRPQDVK) are interaction with STAT1. The tract at residues 2-58 (STNPKPQRKTKRNTNRRPQDVKFPGGGQIVGGVYLLPRRGPRLGVRATRKTSERSQP) is interaction with EIF2AK2/PKR. The segment at 2–59 (STNPKPQRKTKRNTNRRPQDVKFPGGGQIVGGVYLLPRRGPRLGVRATRKTSERSQPR) is interaction with DDX3X. Residues 2-75 (STNPKPQRKT…PKARQPEGRA (74 aa)) are disordered. Over 2 to 168 (STNPKPQRKT…EDGVNYATGN (167 aa)) the chain is Cytoplasmic. Short sequence motifs (nuclear localization signal) lie at residues 5-13 (PKPQRKTKR) and 38-43 (PRRGPR). Residues 7–16 (PQRKTKRNTN) are compositionally biased toward basic residues. Residues 32–47 (GGVYLLPRRGPRLGVR) show a composition bias toward low complexity. S53 bears the Phosphoserine; by host mark. Short sequence motifs (nuclear localization signal) lie at residues 58-64 (PRGRRQP) and 66-71 (PKARQP). S99 is subject to Phosphoserine; by host. The segment at 112-152 (PRRRSRNLGKVIDTLTCGFADLMGYIPLVGAPLGGVARALA) is important for endoplasmic reticulum and mitochondrial localization. Phosphoserine; by host PKA is present on S116. The tract at residues 122–173 (VIDTLTCGFADLMGYIPLVGAPLGGVARALAHGVRVVEDGVNYATGNLPGCS) is interaction with APOA2. The important for lipid droplets localization stretch occupies residues 164-167 (YATG). A helical transmembrane segment spans residues 169 to 189 (LPGCSFSIFLLALLSCLTIPA). A propeptide spans 178-191 (LLALLSCLTIPASA) (ER anchor for the core protein, removed in mature form by host signal peptidase). Residues 190–358 (SAYEVRNVSG…AGAHWGVLAG (169 aa)) are Lumenal-facing. N-linked (GlcNAc...) asparagine; by host glycosylation is found at N196, N209, N234, and N250. The tract at residues 265–296 (LVGAAAFCSAMYVGDLCGSVFLVSQLFTFSPR) is important for fusion. N305 is a glycosylation site (N-linked (GlcNAc...) asparagine; by host). Residues 359 to 379 (LAYYSMVGNWAKVLIVMLLFA) traverse the membrane as a helical segment. Topologically, residues 380 to 725 (GVDGETRVTG…WDYIVILFLL (346 aa)) are lumenal. The interval 385–411 (TRVTGGQIARNAYSLTTLFSSGSAQNI) is HVR1. N-linked (GlcNAc...) (high mannose) asparagine; by host glycans are attached at residues N417, N423, N430, and N448. Intrachain disulfides connect C429-C552, C452-C459, C486-C494, and C503-C508. The tract at residues 474–479 (YAEQGG) is HVR2. Residues 480 to 493 (QDQRPYCWHYAPKP) form a CD81-binding 1 region. N532 carries an N-linked (GlcNAc...) (high mannose) asparagine; by host glycan. N-linked (GlcNAc...) asparagine; by host glycosylation is present at N540. The CD81-binding 2 stretch occupies residues 544 to 551 (PPQGNWFG). Residue N556 is glycosylated (N-linked (GlcNAc...) (high mannose) asparagine; by host). Residues C564 and C569 are joined by a disulfide bond. N576 carries an N-linked (GlcNAc...) (high mannose) asparagine; by host glycan. Disulfide bonds link C581-C585, C597-C620, and C607-C644. N623 and N645 each carry an N-linked (GlcNAc...) (high mannose) asparagine; by host glycan. An intrachain disulfide couples C652 to C677. The interval 660–671 (LELSPLLLSTTE) is PKR/eIF2-alpha phosphorylation homology domain (PePHD). A helical transmembrane segment spans residues 726–746 (LADARVCACLWMMLLIAQAEA). The Lumenal portion of the chain corresponds to 747–757 (ALENLVVLNAA). The helical transmembrane segment at 758–778 (SVAGAHGILSFLVFFCAAWYI) threads the bilayer. Topologically, residues 779 to 781 (KGK) are cytoplasmic. The helical transmembrane segment at 782 to 803 (LVPGAAYAFYGVWPLLLLLLAL) threads the bilayer. Residues 804–813 (PPRAYAMERE) are Lumenal-facing. The chain crosses the membrane as a helical span at residues 814–834 (MAASCGGAVFVGLVLLTLSPY). At 835 to 838 (YKEF) the chain is on the cytoplasmic side. The helical transmembrane segment at 839–859 (LARLIWWLQYFITRAEAHLQV) threads the bilayer. At 860–881 (WIPPLNIRGGRDAIILLACVVH) the chain is on the lumenal side. A helical transmembrane segment spans residues 882-902 (PELIFDITKLLLAILGPLMVL). The Peptidase C18 domain occupies 903–1026 (QASITQVPYF…SLEGQGWRLL (124 aa)). Over 903–1657 (QASITQVPYF…CMSADLEVVT (755 aa)) the chain is Cytoplasmic. Positions 904–1206 (ASITQVPYFV…PVESMETTMR (303 aa)) are protease NS2-3. A lipid anchor (S-palmitoyl cysteine; by host) is attached at C922. An interaction with host SCPS1 region spans residues 929–949 (AGGHYVQMAFVKLTALTGTYV). Catalysis depends on for protease NS2 activity; shared with dimeric partner residues H952, E972, and C993. The Peptidase S29 domain maps to 1027–1208 (APITAYSQQT…ESMETTMRSP (182 aa)). Active-site charge relay system; for serine protease NS3 activity residues include H1083 and D1107. Zn(2+)-binding residues include C1123 and C1125. The active-site Charge relay system; for serine protease NS3 activity is S1165. C1171 and H1175 together coordinate Zn(2+). In terms of domain architecture, Helicase ATP-binding spans 1217 to 1369 (PAVPQTFQVA…PNIEEVALSN (153 aa)). 1230–1237 (APTGSGKS) is an ATP binding site. Residues S1237 and E1317 each contribute to the Mg(2+) site. Positions 1316–1319 (DECH) match the DECH box motif. The RNA-binding stretch occupies residues 1486 to 1497 (QRRGRTGRGRRG). A helical transmembrane segment spans residues 1658–1678 (STWVLVGGVLAALAAYCLTTG). The NS3-binding stretch occupies residues 1679–1690 (SVVIVGRIILSG). The Cytoplasmic portion of the chain corresponds to 1679-1805 (SVVIVGRIIL…SITSPLSTQN (127 aa)). The helical transmembrane segment at 1806-1824 (TLLFNIWGGWVAAQLAPPS) threads the bilayer. At 1825–1828 (AASA) the chain is on the lumenal side. A helical transmembrane segment spans residues 1829 to 1849 (FVGAGIAGAAVGSIGLGKVLV). Residue D1850 is a topological domain, cytoplasmic. Residues 1851–1871 (ILAGYGAGVAGALVAFKIMSG) form a helical membrane-spanning segment. Residues 1872-1881 (EVPSTEDLVN) lie on the Lumenal side of the membrane. The chain crosses the membrane as a helical span at residues 1882–1902 (LLPAILSPGALVVGVVCAAIL). At 1903–1972 (RRHVGPGEGA…WINEDCSTPC (70 aa)) the chain is on the cytoplasmic side. 2 S-palmitoyl cysteine; by host lipidation sites follow: C1968 and C1972. An intramembrane segment occupies 1973–2002 (SGSWLRDVWDWICTVLTDFKTWLQSKLLPR). Topologically, residues 2003-2989 (LPGVPFFSCQ…YHSLSRARPR (987 aa)) are cytoplasmic. Residues C2011, C2029, C2031, and C2052 each coordinate Zn(2+). Residues 2120–2208 (EFFTEVDGVR…ASSSASQLSA (89 aa)) are FKBP8-binding. Positions 2120–2332 (EFFTEVDGVR…PIPPPRRKRT (213 aa)) are transcriptional activation. The interaction with non-structural protein 4A stretch occupies residues 2135–2139 (PACKP). Residues 2189 to 2441 (RLARGSPPSL…PCAAEESKLP (253 aa)) form an interaction with host SKP2 region. Residue S2194 is modified to Phosphoserine; by host; in p56. Residues S2197, S2201, S2204, S2207, and S2210 each carry the phosphoserine; by host; in p58 modification. The interval 2210–2249 (SLKATCTTHHDSPDVDLIEANLLWRQEMGGNITRVESENK) is ISDR. Residues 2210–2275 (SLKATCTTHH…REPSVAAEIL (66 aa)) are interaction with EIF2AK2/PKR. Residues 2249–2306 (KVVILDSFDPLRAEEDEREPSVAAEILRKTKRFPPAMPIWARPDYNPPLLESWKDPDY) are NS4B-binding. An SH3-binding motif is present at residues 2322–2325 (PPIP). The Nuclear localization signal signature appears at 2326–2334 (PPRRKRTVV). Residue K2350 forms a Glycyl lysine isopeptide (Lys-Gly) (interchain with G-Cter in ubiquitin) linkage. Residues 2351–2365 (TFGSSGSSAVDSGTA) show a composition bias toward polar residues. Residues 2351–2407 (TFGSSGSSAVDSGTATAPPDQASDDGDQGSDVESYSSMPPLEGEPGDPDLSDGSWST) form a disordered region. The segment at 2354–2377 (SSGSSAVDSGTATAPPDQASDDGD) is V3. Residues S2448 and S2461 each carry the phosphoserine; by host modification. One can recognise a RdRp catalytic domain in the interval 2633–2751 (PMGFSYDTRC…ICESAGTQED (119 aa)). The Mg(2+) site is built by D2639, D2737, and D2738. The chain crosses the membrane as a helical span at residues 2990–3010 (WFMLCLLLLSVGVGIYLLPNR).

The protein belongs to the hepacivirus polyprotein family. In terms of assembly, homooligomer. Interacts with E1 (via C-terminus). Interacts with the non-structural protein 5A. Interacts (via N-terminus) with host STAT1 (via SH2 domain); this interaction results in decreased STAT1 phosphorylation and ubiquitin-mediated proteasome-dependent STAT1 degradation, leading to decreased IFN-stimulated gene transcription. Interacts with host STAT3; this interaction constitutively activates STAT3. Interacts with host LTBR receptor. Interacts with host TNFRSF1A receptor and possibly induces apoptosis. Interacts with host HNRPK. Interacts with host YWHAE. Interacts with host UBE3A/E6AP. Interacts with host DDX3X. Interacts with host APOA2. Interacts with host RXRA protein. Interacts with host SP110 isoform 3/Sp110b; this interaction sequesters the transcriptional corepressor SP110 away from the nucleus. Interacts with host CREB3 nuclear transcription protein; this interaction triggers cell transformation. Interacts with host ACY3. Interacts with host C1QR1. Interacts with host RBM24; this interaction, which enhances the interaction of the mature core protein with 5'-UTR, may inhibit viral translation and favor replication. Interacts with host EIF2AK2/PKR; this interaction induces the autophosphorylation of EIF2AK2. Part of the viral assembly initiation complex composed of NS2, E1, E2, NS3, NS4A, NS5A and the mature core protein. As to quaternary structure, forms a heterodimer with envelope glycoprotein E2. Interacts with mature core protein. Interacts with protease NS2. The heterodimer E1/E2 interacts with host CLDN1; this interaction plays a role in viral entry into host cell. Interacts with host SPSB2 (via C-terminus). Part of the viral assembly initiation complex composed of NS2, E1, E2, NS3, NS4A, NS5A and the mature core protein. Interacts with host NEURL3; this interaction prevents E1 binding to glycoprotein E2. Forms a heterodimer with envelope glycoprotein E1. Interacts with host CD81 and SCARB1 receptors; these interactions play a role in viral entry into host cell. Interacts with host EIF2AK2/PKR; this interaction inhibits EIF2AK2 and probably allows the virus to evade the innate immune response. Interacts with host CD209/DC-SIGN and CLEC4M/DC-SIGNR. Interact with host SPCS1; this interaction is essential for viral particle assembly. Interacts with protease NS2. The heterodimer E1/E2 interacts with host CLDN1; this interaction plays a role in viral entry into host cell. Part of the viral assembly initiation complex composed of NS2, E1, E2, NS3, NS4A, NS5A and the mature core protein. Interacts with host SLC3A2/4F2hc; the interaction may facilitate viral entry into host cell. Interacts with human PLSCR1. In terms of assembly, homohexamer. Homoheptamer. Interacts with protease NS2. As to quaternary structure, homodimer. Interacts with host SPCS1; this interaction is essential for viral particle assembly. Interacts with envelope glycoprotein E1. Interacts with envelope glycoprotein E2. Interacts with viroporin p7. Interacts with serine protease/helicase NS3. Part of the replication complex composed of NS2, NS3, NS4A, NS4B, NS5A and the RNA-directed RNA polymerase embedded in an ER-derived membranous web. Part of the viral assembly initiation complex composed of NS2, E1, E2, NS3, NS4A, NS5A and the mature core protein. Interacts with protease NS2. Interacts with non-structural protein 4A; this interaction stabilizes the folding of NS3 serine protease. NS3-NS4A interaction is essential for NS3 activation and allows membrane anchorage of the latter. NS3/NS4A complex also prevents phosphorylation of host IRF3, thus preventing the establishment of dsRNA induced antiviral state. Interacts with host MAVS; this interaction leads to the cleavage and inhibition of host MAVS. Interacts with host TICAM1; this interaction leads to the cleavage and inhibition of host TICAM1. Interacts with host TANK-binding kinase/TBK1; this interaction results in the inhibition of the association between TBK1 and IRF3, which leads to the inhibition of IRF3 activation. Interacts with host RBM24. Part of the replication complex composed of NS2, NS3, NS4A, NS4B, NS5A and the RNA-directed RNA polymerase embedded in an ER-derived membranous web. Part of the viral assembly initiation complex composed of NS2, E1, E2, NS3, NS4A, NS5A and the mature core protein. In terms of assembly, interacts with NS3 serine protease; this interaction stabilizes the folding of NS3 serine protease. NS3-NS4A interaction is essential for NS3 activation and allows membrane anchorage of the latter. Interacts with non-structural protein 5A (via N-terminus). Part of the replication complex composed of NS2, NS3, NS4A, NS4B, NS5A and the RNA-directed RNA polymerase embedded in an ER-derived membranous web. Part of the viral assembly initiation complex composed of NS2, E1, E2, NS3, NS4A, NS5A and the mature core protein. As to quaternary structure, homomultimer. Interacts with non-structural protein NS5A. Interacts with host PLA2G4C; this interaction likely initiates the recruitment of replication complexes to lipid droplets. Interacts with host STING; this interaction disrupts the interaction between STING and TBK1 thereby suppressing the interferon signaling. Part of the replication complex composed of NS2, NS3, NS4A, NS4B, NS5A and the RNA-directed RNA polymerase embedded in an ER-derived membranous web. Monomer. Homodimer; dimerization is required for RNA-binding. Interacts with the mature core protein. Interacts (via N-terminus) with non-structural protein 4A. Interacts with non-structural protein 4B. Interacts (via region D2) with RNA-directed RNA polymerase. Part of the viral assembly initiation complex composed of NS2, E1, E2, NS3, NS4A, NS5A and the mature core protein. Part of the replication complex composed of NS2, NS3, NS4A, NS4B, NS5A and the RNA-directed RNA polymerase embedded in an ER-derived membranous web. Interacts with host GRB2. Interacts with host BIN1. Interacts with host PIK3R1. Interacts with host SRCAP. Interacts with host FKBP8. Interacts (via C-terminus) with host VAPB (via MSP domain). Interacts with host EIF2AK2/PKR; this interaction leads to disruption of EIF2AK2 dimerization by NS5A and probably allows the virus to evade the innate immune response. Interacts (via N-terminus) with host PACSIN2 (via N-terminus); this interaction attenuates protein kinase C alpha-mediated phosphorylation of PACSIN2 by disrupting the interaction between PACSIN2 and PRKCA. Interacts (via N-terminus) with host SRC kinase (via SH2 domain). Interacts with most Src-family kinases. Interacts with host IFI27 and SKP2; promotes the ubiquitin-mediated proteasomal degradation of NS5A. Interacts with host GPS2. Interacts with host TNFRSF21; this interaction allows the modulation by the virus of JNK, p38 MAPK, STAT3, and Akt signaling pathways in a DR6-dependent manner. Interacts (via N-terminus) with host CIDEB (via N-terminus); this interaction seems to regulate the association of HCV particles with APOE. Interacts with host CHKA/Choline Kinase-alpha; CHKA bridges host PI4KA and NS5A and potentiates NS5A-stimulated PI4KA activity, which then facilitates the targeting of the ternary complex to the ER for viral replication. Interacts with host SPSB2 (via C-terminus); this interaction targets NS5A for ubiquitination and degradation. Interacts with host RAB18; this interaction may promote the association of NS5A and other replicase components with lipid droplets. Interacts (via region D2) with host PPIA/CYPA; the interaction stimulates RNA-binding ability of NS5A and is dependent on the peptidyl-prolyl cis-trans isomerase activity of PPIA/CYPA. Interacts with host TRIM14; this interaction induces the degradation of NS5A. In terms of assembly, homooligomer. Interacts with non-structural protein 5A. Interacts with host VAPB. Interacts with host PRK2/PKN2. Interacts with host HNRNPA1 and SEPT6; these interactions facilitate viral replication. Part of the replication complex composed of NS2, NS3, NS4A, NS4B, NS5A and the RNA-directed RNA polymerase. Zn(2+) is required as a cofactor. Requires Mg(2+) as cofactor. Post-translationally, specific enzymatic cleavages in vivo yield mature proteins. The structural proteins, core, E1, E2 and p7 are produced by proteolytic processing by host signal peptidases. The core protein precursor is synthesized as a 23 kDa, which is retained in the ER membrane through the hydrophobic signal peptide. Cleavage by the signal peptidase releases the 21 kDa mature core protein. The cleavage of the core protein precursor occurs between aminoacids 176 and 188 but the exact cleavage site is not known. Some degraded forms of the core protein appear as well during the course of infection. The other proteins (p7, NS2, NS3, NS4A, NS4B, NS5A and NS5B) are cleaved by the viral proteases. Autoprocessing between NS2 and NS3 is mediated by the NS2 cysteine protease catalytic domain and regulated by the NS3 N-terminal domain. In terms of processing, phosphorylated by host PKC and PKA. Ubiquitinated; mediated by UBE3A and leading to core protein subsequent proteasomal degradation. Post-translationally, highly N-glycosylated. In terms of processing, palmitoylation is required for NS2/3 autoprocessing and E2 recruitment to membranes. Palmitoylated. This modification may play a role in its polymerization or in protein-protein interactions. Post-translationally, phosphorylated on serines in a basal form termed p56. p58 is a hyperphosphorylated form of p56. p56 and p58 coexist in the cell in roughly equivalent amounts. Hyperphosphorylation is dependent on the presence of NS4A. Host CSNK1A1/CKI-alpha or RPS6KB1 kinases may be responsible for NS5A phosphorylation. In terms of processing, tyrosine phosphorylation is essential for the interaction with host SRC. Ubiquitinated. Ubiquitination, most probably at Lys-2350, mediated by host IFI27 and SKP2 leads to proteasomal degradation, restricting viral infection. Ubiquitination by host TRIM22 leads to interruption of viral replication. Post-translationally, the N-terminus is phosphorylated by host PRK2/PKN2.

It localises to the host endoplasmic reticulum membrane. The protein resides in the host mitochondrion membrane. Its subcellular location is the virion. The protein localises to the host cytoplasm. It is found in the host nucleus. It localises to the host lipid droplet. The protein resides in the virion membrane. Its subcellular location is the host mitochondrion. The protein localises to the host cell membrane. It is found in the host perinuclear region. The catalysed reaction is Hydrolysis of four peptide bonds in the viral precursor polyprotein, commonly with Asp or Glu in the P6 position, Cys or Thr in P1 and Ser or Ala in P1'.. The enzyme catalyses a ribonucleoside 5'-triphosphate + H2O = a ribonucleoside 5'-diphosphate + phosphate + H(+). It carries out the reaction ATP + H2O = ADP + phosphate + H(+). It catalyses the reaction RNA(n) + a ribonucleoside 5'-triphosphate = RNA(n+1) + diphosphate. Its activity is regulated as follows. Inhibited by the antiviral drug hexamethylene amiloride. Inhibition by amantadine appears to be genotype-dependent. Also inhibited by long-alkyl-chain iminosugar derivatives. Activity is up-regulated by PRK2/PKN2-mediated phosphorylation. Functionally, packages viral RNA to form a viral nucleocapsid, and promotes virion budding. Participates in the viral particle production as a result of its interaction with the non-structural protein 5A. Binds RNA and may function as a RNA chaperone to induce the RNA structural rearrangements taking place during virus replication. Modulates viral translation initiation by interacting with viral IRES and 40S ribosomal subunit. Affects various cell signaling pathways, host immunity and lipid metabolism. Prevents the establishment of cellular antiviral state by blocking the interferon-alpha/beta (IFN-alpha/beta) and IFN-gamma signaling pathways and by blocking the formation of phosphorylated STAT1 and promoting ubiquitin-mediated proteasome-dependent degradation of STAT1. Activates STAT3 leading to cellular transformation. Regulates the activity of cellular genes, including c-myc and c-fos. May repress the promoter of p53, and sequester CREB3 and SP110 isoform 3/Sp110b in the cytoplasm. Represses cell cycle negative regulating factor CDKN1A, thereby interrupting an important check point of normal cell cycle regulation. Targets transcription factors involved in the regulation of inflammatory responses and in the immune response: suppresses TNF-induced NF-kappa-B activation, and activates AP-1. Binds to dendritic cells (DCs) via C1QR1, resulting in down-regulation of T-lymphocytes proliferation. Alters lipid metabolism by interacting with hepatocellular proteins involved in lipid accumulation and storage. Induces up-regulation of FAS promoter activity, and thereby contributes to the increased triglyceride accumulation in hepatocytes (steatosis). Its function is as follows. Forms a heterodimer with envelope glycoprotein E2, which mediates virus attachment to the host cell, virion internalization through clathrin-dependent endocytosis and fusion with host membrane. Fusion with the host cell is most likely mediated by both E1 and E2, through conformational rearrangements of the heterodimer required for fusion rather than a classical class II fusion mechanism. E1/E2 heterodimer binds host apolipoproteins such as APOB and APOE thereby forming a lipo-viro-particle (LVP). APOE associated to the LVP allows the initial virus attachment to cell surface receptors such as the heparan sulfate proteoglycans (HSPGs), syndecan-1 (SDC1), syndecan-1 (SDC2), the low-density lipoprotein receptor (LDLR) and scavenger receptor class B type I (SCARB1). The cholesterol transfer activity of SCARB1 allows E2 exposure and binding of E2 to SCARB1 and the tetraspanin CD81. E1/E2 heterodimer binding on CD81 activates the epithelial growth factor receptor (EGFR) signaling pathway. Diffusion of the complex E1-E2-EGFR-SCARB1-CD81 to the cell lateral membrane allows further interaction with Claudin 1 (CLDN1) and occludin (OCLN) to finally trigger HCV entry. Forms a heterodimer with envelope glycoprotein E1, which mediates virus attachment to the host cell, virion internalization through clathrin-dependent endocytosis and fusion with host membrane. Fusion with the host cell is most likely mediated by both E1 and E2, through conformational rearrangements of the heterodimer required for fusion rather than a classical class II fusion mechanism. The interaction between envelope glycoprotein E2 and host apolipoprotein E/APOE allows the proper assembly, maturation and infectivity of the viral particles. This interaction is probably promoted via the up-regulation of cellular autophagy by the virus. E1/E2 heterodimer binds host apolipoproteins such as APOB and APOE thereby forming a lipo-viro-particle (LVP). APOE associated to the LVP allows the initial virus attachment to cell surface receptors such as the heparan sulfate proteoglycans (HSPGs), syndecan-1 (SDC1), syndecan-1 (SDC2), the low-density lipoprotein receptor (LDLR) and scavenger receptor class B type I (SCARB1). The cholesterol transfer activity of SCARB1 allows E2 exposure and binding of E2 to SCARB1 and the tetraspanin CD81. E1/E2 heterodimer binding on CD81 activates the epithelial growth factor receptor (EGFR) signaling pathway. Diffusion of the complex E1-E2-EGFR-SCARB1-CD81 to the cell lateral membrane allows further interaction with Claudin 1 (CLDN1) and occludin (OCLN) to finally trigger HCV entry. Inhibits host EIF2AK2/PKR activation, preventing the establishment of an antiviral state. Viral ligand for CD209/DC-SIGN and CLEC4M/DC-SIGNR, which are respectively found on dendritic cells (DCs), and on liver sinusoidal endothelial cells and macrophage-like cells of lymph node sinuses. These interactions allow the capture of circulating HCV particles by these cells and subsequent facilitated transmission to permissive cells such as hepatocytes and lymphocyte subpopulations. The interaction between E2 and host amino acid transporter complex formed by SLC3A2 and SLC7A5/LAT1 may facilitate viral entry into host cell. In terms of biological role, ion channel protein that acts as a viroporin and plays an essential role in the assembly, envelopment and secretion of viral particles. Regulates the host cell secretory pathway, which induces the intracellular retention of viral glycoproteins and favors assembly of viral particles. Creates a pore in acidic organelles and releases Ca(2+) and H(+) in the cytoplasm of infected cells, leading to a productive viral infection. High levels of cytoplasmic Ca(2+) may trigger membrane trafficking and transport of viral ER-associated proteins to viroplasms, sites of viral genome replication. This ionic imbalance induces the assembly of the inflammasome complex, which triggers the maturation of pro-IL-1beta into IL-1beta through the action of caspase-1. Targets also host mitochondria and induces mitochondrial depolarization. In addition of its role as a viroporin, acts as a lipid raft adhesion factor. Functionally, cysteine protease required for the proteolytic auto-cleavage between the non-structural proteins NS2 and NS3. The N-terminus of NS3 is required for the function of NS2 protease (active region NS2-3). Promotes the initiation of viral particle assembly by mediating the interaction between structural and non-structural proteins. Its function is as follows. Displays three enzymatic activities: serine protease with a chymotrypsin-like fold, NTPase and RNA helicase. NS3 serine protease, in association with NS4A, is responsible for the cleavages of NS3-NS4A, NS4A-NS4B, NS4B-NS5A and NS5A-NS5B. The NS3/NS4A complex prevents phosphorylation of host IRF3, thus preventing the establishment of dsRNA induced antiviral state. The NS3/NS4A complex induces host amino acid transporter component SLC3A2, thus contributing to HCV propagation. NS3 RNA helicase binds to RNA and unwinds both dsDNA and dsRNA in the 3' to 5' direction, and likely resolves RNA complicated stable secondary structures in the template strand. Binds a single ATP and catalyzes the unzipping of a single base pair of dsRNA. Inhibits host antiviral proteins TBK1 and IRF3 thereby preventing the establishment of an antiviral state. Cleaves host MAVS/CARDIF thereby preventing the establishment of an antiviral state. Cleaves host TICAM1/TRIF, thereby disrupting TLR3 signaling and preventing the establishment of an antiviral state. Peptide cofactor which forms a non-covalent complex with the N-terminal of NS3 serine protease. The NS3/NS4A complex prevents phosphorylation of host IRF3, thus preventing the establishment of dsRNA induced antiviral state. The NS3/NS4A complex induces host amino acid transporter component SLC3A2, thus contributing to HCV propagation. In terms of biological role, induces a specific membrane alteration that serves as a scaffold for the virus replication complex. This membrane alteration gives rise to the so-called ER-derived membranous web that contains the replication complex. NS4B self-interaction contributes to its function in membranous web formation. Promotes host TRIF protein degradation in a CASP8-dependent manner thereby inhibiting host TLR3-mediated interferon signaling. Disrupts the interaction between STING and TBK1 contributing to the inhibition of interferon signaling. Functionally, phosphorylated protein that is indispensable for viral replication and assembly. Both hypo- and hyperphosphorylated states are required for the viral life cycle. The hyperphosphorylated form of NS5A is an inhibitor of viral replication. Involved in RNA-binding and especially in binding to the viral genome. Zinc is essential for RNA-binding. Participates in the viral particle production as a result of its interaction with the mature viral core protein. Its interaction with host VAPB may target the viral replication complex to vesicles. Down-regulates viral IRES translation initiation. Mediates interferon resistance, presumably by interacting with and inhibiting host EIF2AK2/PKR. Prevents BIN1-induced apoptosis. Acts as a transcriptional activator of some host genes important for viral replication when localized in the nucleus. Via the interaction with host PACSIN2, modulates lipid droplet formation in order to promote virion assembly. Modulates TNFRSF21/DR6 signaling pathway for viral propagation. Its function is as follows. RNA-dependent RNA polymerase that performs primer-template recognition and RNA synthesis during viral replication. Initiates RNA transcription/replication at a flavin adenine dinucleotide (FAD), resulting in a 5'- FAD cap on viral RNAs. In this way, recognition of viral 5' RNA by host pattern recognition receptors can be bypassed, thereby evading activation of antiviral pathways. The chain is Genome polyprotein from Homo sapiens (Human).